Here is a 168-residue protein sequence, read N- to C-terminus: Cell division inhibitor SulA (168 aa).

The segment at 1-20 is disordered; it reads MSTQSVSSHNIESSSFSANQ. The tract at residues 105-111 is ftsZ binding; the sequence is ALLTGNY. The tract at residues 161–168 is lon protease binding; that stretch reads KIHSTLYH.

The protein belongs to the SulA family. In terms of assembly, interacts with FtsZ. In terms of processing, is rapidly cleaved and degraded by the Lon protease once DNA damage is repaired.

Functionally, component of the SOS system and an inhibitor of cell division. Accumulation of SulA causes rapid cessation of cell division and the appearance of long, non-septate filaments. In the presence of GTP, binds a polymerization-competent form of FtsZ in a 1:1 ratio, thus inhibiting FtsZ polymerization and therefore preventing it from participating in the assembly of the Z ring. This mechanism prevents the premature segregation of damaged DNA to daughter cells during cell division. The sequence is that of Cell division inhibitor SulA from Pectobacterium atrosepticum (strain SCRI 1043 / ATCC BAA-672) (Erwinia carotovora subsp. atroseptica).